A 243-amino-acid polypeptide reads, in one-letter code: Pyridoxine 5'-phosphate synthase (243 aa).

Asparagine 9 is a binding site for 3-amino-2-oxopropyl phosphate. Position 11–12 (11–12 (DH)) interacts with 1-deoxy-D-xylulose 5-phosphate. A 3-amino-2-oxopropyl phosphate-binding site is contributed by arginine 20. The active-site Proton acceptor is the histidine 45. 1-deoxy-D-xylulose 5-phosphate-binding residues include arginine 47 and histidine 52. The Proton acceptor role is filled by glutamate 72. Position 102 (threonine 102) interacts with 1-deoxy-D-xylulose 5-phosphate. The active-site Proton donor is histidine 193. 3-amino-2-oxopropyl phosphate contacts are provided by residues glycine 194 and 215-216 (GH).

The protein belongs to the PNP synthase family. In terms of assembly, homooctamer; tetramer of dimers.

It is found in the cytoplasm. It catalyses the reaction 3-amino-2-oxopropyl phosphate + 1-deoxy-D-xylulose 5-phosphate = pyridoxine 5'-phosphate + phosphate + 2 H2O + H(+). Its pathway is cofactor biosynthesis; pyridoxine 5'-phosphate biosynthesis; pyridoxine 5'-phosphate from D-erythrose 4-phosphate: step 5/5. In terms of biological role, catalyzes the complicated ring closure reaction between the two acyclic compounds 1-deoxy-D-xylulose-5-phosphate (DXP) and 3-amino-2-oxopropyl phosphate (1-amino-acetone-3-phosphate or AAP) to form pyridoxine 5'-phosphate (PNP) and inorganic phosphate. This Photorhabdus laumondii subsp. laumondii (strain DSM 15139 / CIP 105565 / TT01) (Photorhabdus luminescens subsp. laumondii) protein is Pyridoxine 5'-phosphate synthase.